The primary structure comprises 152 residues: Ribosomal RNA large subunit methyltransferase H (152 aa).

Residues leucine 68, glycine 100, and 119-124 (LGVMTW) each bind S-adenosyl-L-methionine.

It belongs to the RNA methyltransferase RlmH family. Homodimer.

Its subcellular location is the cytoplasm. It catalyses the reaction pseudouridine(1915) in 23S rRNA + S-adenosyl-L-methionine = N(3)-methylpseudouridine(1915) in 23S rRNA + S-adenosyl-L-homocysteine + H(+). Its function is as follows. Specifically methylates the pseudouridine at position 1915 (m3Psi1915) in 23S rRNA. The sequence is that of Ribosomal RNA large subunit methyltransferase H from Rhodospirillum rubrum (strain ATCC 11170 / ATH 1.1.1 / DSM 467 / LMG 4362 / NCIMB 8255 / S1).